We begin with the raw amino-acid sequence, 293 residues long: Calcium uniporter protein 2, mitochondrial (293 aa).

A mitochondrion-targeting transit peptide spans 1 to 33 (MWSVMGLVRRTAMSSTVNKASPVRSLLGGFRCL). A helical transmembrane segment spans residues 168–188 (ILWGGLGYSVVQIGIFVRLTF). The Selectivity filter signature appears at 193-201 (WDVMEPITF). Position 197 (Glu197) interacts with Ca(2+). Residues 198-218 (PITFFTTATGIIVGYAYFLMT) form a helical membrane-spanning segment.

Belongs to the MCU (TC 1.A.77) family.

It is found in the mitochondrion inner membrane. It carries out the reaction Ca(2+)(in) = Ca(2+)(out). In terms of biological role, mitochondrial inner membrane calcium uniporter that mediates calcium uptake into mitochondria. Constitutes a pore-forming and calcium-conducting subunit. Mitochondrial calcium homeostasis plays key roles in cellular physiology and regulates cell bioenergetics, cytoplasmic calcium signals and activation of cell death pathways. The polypeptide is Calcium uniporter protein 2, mitochondrial (Arabidopsis thaliana (Mouse-ear cress)).